We begin with the raw amino-acid sequence, 287 residues long: ATP synthase gamma chain (287 aa).

It belongs to the ATPase gamma chain family. F-type ATPases have 2 components, CF(1) - the catalytic core - and CF(0) - the membrane proton channel. CF(1) has five subunits: alpha(3), beta(3), gamma(1), delta(1), epsilon(1). CF(0) has three main subunits: a, b and c.

The protein localises to the cell membrane. Produces ATP from ADP in the presence of a proton gradient across the membrane. The gamma chain is believed to be important in regulating ATPase activity and the flow of protons through the CF(0) complex. This chain is ATP synthase gamma chain, found in Halothermothrix orenii (strain H 168 / OCM 544 / DSM 9562).